A 386-amino-acid chain; its full sequence is Protein RecA (386 aa).

76–83 (GPESSGKT) is a binding site for ATP. The tract at residues 362-386 (FDDEDDDFDASTAPAGTFTEVTTEN) is disordered.

The protein belongs to the RecA family.

The protein localises to the cytoplasm. Its function is as follows. Can catalyze the hydrolysis of ATP in the presence of single-stranded DNA, the ATP-dependent uptake of single-stranded DNA by duplex DNA, and the ATP-dependent hybridization of homologous single-stranded DNAs. It interacts with LexA causing its activation and leading to its autocatalytic cleavage. In Corynebacterium efficiens (strain DSM 44549 / YS-314 / AJ 12310 / JCM 11189 / NBRC 100395), this protein is Protein RecA.